The following is a 116-amino-acid chain: Large ribosomal subunit protein bL17 (116 aa).

This sequence belongs to the bacterial ribosomal protein bL17 family. Part of the 50S ribosomal subunit. Contacts protein L32.

This chain is Large ribosomal subunit protein bL17, found in Acaryochloris marina (strain MBIC 11017).